We begin with the raw amino-acid sequence, 351 residues long: Glucan endo-1,3-beta-glucosidase (351 aa).

An N-terminal signal peptide occupies residues 1 to 32; sequence MALWYLFNKRSLGAAVLILVGLLMCNIQITGA. Gln33 bears the Pyrrolidone carboxylic acid mark. Residues Asn79 and Asn99 are each glycosylated (N-linked (GlcNAc...) asparagine). The active-site Proton donor is Glu128. A glycan (N-linked (GlcNAc...) asparagine) is linked at Asn235. Glu268 (nucleophile) is an active-site residue.

Belongs to the glycosyl hydrolase 17 family. In terms of processing, glycosylated. The N-terminus is blocked.

It is found in the secreted. The protein resides in the extracellular space. Its subcellular location is the extracellular matrix. It carries out the reaction Hydrolysis of (1-&gt;3)-beta-D-glucosidic linkages in (1-&gt;3)-beta-D-glucans.. Functionally, implicated in the defense of plants against pathogens. This Nicotiana tabacum (Common tobacco) protein is Glucan endo-1,3-beta-glucosidase (SP41B).